The sequence spans 968 residues: RNA polymerase-associated protein RapA (968 aa).

In terms of domain architecture, Helicase ATP-binding spans 163–332 (EVGRRYAPRV…FARLRLLDPD (170 aa)). Residue 176 to 183 (DEVGLGKT) participates in ATP binding. The DEAH box signature appears at 278-281 (DEAH). Residues 491-643 (RVDWLIAFLK…ELTCPSGHVL (153 aa)) form the Helicase C-terminal domain.

It belongs to the SNF2/RAD54 helicase family. RapA subfamily. In terms of assembly, interacts with the RNAP. Has a higher affinity for the core RNAP than for the holoenzyme. Its ATPase activity is stimulated by binding to RNAP.

Its function is as follows. Transcription regulator that activates transcription by stimulating RNA polymerase (RNAP) recycling in case of stress conditions such as supercoiled DNA or high salt concentrations. Probably acts by releasing the RNAP, when it is trapped or immobilized on tightly supercoiled DNA. Does not activate transcription on linear DNA. Probably not involved in DNA repair. The sequence is that of RNA polymerase-associated protein RapA from Shewanella sp. (strain W3-18-1).